Here is a 132-residue protein sequence, read N- to C-terminus: Agouti-signaling protein (132 aa).

The signal sequence occupies residues 1–22 (MDVTRLLLATLLVFLCFFTAYS). N-linked (GlcNAc...) asparagine glycosylation is present at N39. Positions 62 to 88 (ISRKEAEKKRSSKKEASMKKVARPRTP) are disordered. Residues 63–79 (SRKEAEKKRSSKKEASM) show a composition bias toward basic and acidic residues. Cystine bridges form between C93–C108, C100–C114, C107–C125, C111–C132, and C116–C123. Residues 93-132 (CVATRDSCKPPAPACCDPCASCQCRFFRSACSCRVLSLNC) form the Agouti domain.

It is found in the secreted. Functionally, involved in the regulation of melanogenesis. The binding of ASP to MC1R precludes alpha-MSH initiated signaling and thus blocks production of cAMP, leading to a down-regulation of eumelanogenesis (brown/black pigment) and thus increasing synthesis of pheomelanin (yellow/red pigment). The sequence is that of Agouti-signaling protein (ASIP) from Chlorocebus aethiops (Green monkey).